Reading from the N-terminus, the 90-residue chain is UPF0213 protein lin0209 (90 aa).

One can recognise a GIY-YIG domain in the interval Asn5 to Ser80.

Belongs to the UPF0213 family.

The chain is UPF0213 protein lin0209 from Listeria innocua serovar 6a (strain ATCC BAA-680 / CLIP 11262).